A 100-amino-acid polypeptide reads, in one-letter code: Small ubiquitin-related modifier 1 (100 aa).

The region spanning Glu-19–Gly-96 is the Ubiquitin-like domain. A Glycyl lysine isopeptide (Gly-Lys) (interchain with K-? in acceptor proteins) cross-link involves residue Gly-96. Positions Cys-97–Asp-100 are excised as a propeptide.

Belongs to the ubiquitin family. SUMO subfamily. As to quaternary structure, interacts with sae2, ube2i, ranbp2, pias1 and pias2. Covalently attached to a number of proteins. Post-translationally, cleavage of precursor form by a sentrin-specific protease is necessary for function.

The protein resides in the nucleus membrane. The protein localises to the nucleus speckle. It is found in the cytoplasm. Its subcellular location is the nucleus. It localises to the PML body. The protein resides in the cell membrane. Ubiquitin-like protein that can be covalently attached to proteins as a monomer or a lysine-linked polymer. Covalent attachment via an isopeptide bond to its substrates requires prior activation by the E1 complex sae1-sae2 and linkage to the E2 enzyme ube2i. This post-translational modification on lysine residues of proteins plays a crucial role in a number of cellular processes such as nuclear transport, DNA replication and repair, mitosis and signal transduction. Polymeric sumo1 chains are also susceptible to polyubiquitination which functions as a signal for proteasomal degradation of modified proteins. This Danio rerio (Zebrafish) protein is Small ubiquitin-related modifier 1 (sumo1).